We begin with the raw amino-acid sequence, 341 residues long: LIM and senescent cell antigen-like-containing domain protein 2 (341 aa).

5 consecutive LIM zinc-binding domains span residues 13–74 (AMCQ…LFAP), 76–133 (CGFC…EKAK), 138–195 (FICQ…KMGI), 196–255 (PICG…LFGD), and 256–315 (VCYN…FPLE). Serine 328 is subject to Phosphoserine.

In terms of assembly, interacts with integrin-linked protein kinase 1 (ILK) via the first LIM domain, and in competition with LIMS1. Part of the heterotrimeric IPP complex composed of integrin-linked kinase (ILK), LIMS1 or LIMS2, and PARVA. Interacts with TGFB1I1. In terms of tissue distribution, detected in heart, lung, kidney, liver, urinary bladder, fat, skin, skeletal muscle, uterus, large intestine and testis.

The protein resides in the cell junction. It localises to the focal adhesion. Its subcellular location is the cell membrane. Functionally, adapter protein in a cytoplasmic complex linking beta-integrins to the actin cytoskeleton, bridges the complex to cell surface receptor tyrosine kinases and growth factor receptors. This is LIM and senescent cell antigen-like-containing domain protein 2 (Lims2) from Mus musculus (Mouse).